Here is a 192-residue protein sequence, read N- to C-terminus: UPF0149 protein Spro_3920 (192 aa).

It belongs to the UPF0149 family.

This is UPF0149 protein Spro_3920 from Serratia proteamaculans (strain 568).